The chain runs to 279 residues: MSHERPPRNDIPRNLSFIAALTERAYYRSQRPSLEEESEEEPGEGGTRPGARSRAHVPGRGRRARSAPAGGGGARTARSRSPDTRKRVRFPDALGLELAVVRRFRPGEPPRVPRHVQVQLQRDALRHFAPCPPRTRGLQDARIALEPALEPGFAARLQAQRICLERADAGPLGVAGSARVLDLAYEKRVSVRWSADGWRSLRESPASYAGPAPAPPRADRFAFRLPAPPVGGALLFALRYRVTGREFWDNNGGRDYALLGPEHPGGAGAAEPQGWIHFI.

Phosphoserine is present on residues Ser-16 and Ser-33. The segment at 28–89 (RSQRPSLEEE…RSPDTRKRVR (62 aa)) is disordered. The span at 51–65 (ARSRAHVPGRGRRAR) shows a compositional bias: basic residues. Ser-66 bears the Phosphoserine mark. The PP1-binding motif signature appears at 87–90 (RVRF). In terms of domain architecture, CBM21 spans 154 to 259 (AARLQAQRIC…NNGGRDYALL (106 aa)). Positions 176 to 198 (GSARVLDLAYEKRVSVRWSADGW) are glycogen-binding motif. Positions 248 to 256 (WDNNGGRDY) are substrate-binding motif.

As to expression, expressed in liver and heart, with low levels in skeletal muscle.

In terms of biological role, acts as a glycogen-targeting subunit for PP1. PP1 is involved in glycogen metabolism and contributes to the activation of glycogen synthase leading to an increase in glycogen synthesis. This is Protein phosphatase 1 regulatory subunit 3E (Ppp1r3e) from Rattus norvegicus (Rat).